The sequence spans 1099 residues: Inverted formin-2 (1099 aa).

In terms of domain architecture, GBD/FH3 spans 1 to 330 (MSLTEGAHTK…RAVLLADDCQ (330 aa)). 2 stretches are compositionally biased toward basic and acidic residues: residues 348–359 (SSKEKRKTDKCT) and 367–385 (QTDK…KKDP). 3 disordered regions span residues 348 to 391 (SSKE…SGIP), 432 to 509 (PSPP…PTPP), and 1000 to 1019 (AEKR…KGEN). Residues 426 to 569 (TCSSVLPSPP…GMLPPPPPLP (144 aa)) form the FH1 domain. Positions 452 to 499 (PLPPPPPPLPGTELSPPPPGMVALSLPPPPPPLPGMGGMLPPPPPPLP) are enriched in pro residues. Residues 621 to 1009 (FLKVNKPTLK…AEKRKQQIAD (389 aa)) enclose the FH2 domain. A coiled-coil region spans residues 907–1019 (LKKLRDLQNK…EETKRQKGEN (113 aa)). In terms of domain architecture, WH2 spans 1037–1052 (DDLLADIKKGFQLRKT). Positions 1064–1085 (KTLSSETNRTDIQHVGKRPEVP) are disordered. Residues 1071 to 1083 (NRTDIQHVGKRPE) show a composition bias toward basic and acidic residues.

The protein belongs to the formin homology family.

This Xenopus laevis (African clawed frog) protein is Inverted formin-2 (inf2).